The following is a 30-amino-acid chain: HAEGTYTSDVSSYLQDQAAKEFVSWLKTGR.

The residue at position 30 (Arg-30) is an Arginine amide.

The protein belongs to the glucagon family.

The protein resides in the secreted. The protein is Glucagon-like peptide of Anguilla anguilla (European freshwater eel).